We begin with the raw amino-acid sequence, 143 residues long: Nucleoside diphosphate kinase (143 aa).

Positions 11, 59, 87, 93, 104, and 114 each coordinate ATP. H117 functions as the Pros-phosphohistidine intermediate in the catalytic mechanism.

Belongs to the NDK family. As to quaternary structure, homotetramer. Mg(2+) serves as cofactor.

The protein localises to the cytoplasm. The enzyme catalyses a 2'-deoxyribonucleoside 5'-diphosphate + ATP = a 2'-deoxyribonucleoside 5'-triphosphate + ADP. The catalysed reaction is a ribonucleoside 5'-diphosphate + ATP = a ribonucleoside 5'-triphosphate + ADP. Functionally, major role in the synthesis of nucleoside triphosphates other than ATP. The ATP gamma phosphate is transferred to the NDP beta phosphate via a ping-pong mechanism, using a phosphorylated active-site intermediate. This Psychrobacter cryohalolentis (strain ATCC BAA-1226 / DSM 17306 / VKM B-2378 / K5) protein is Nucleoside diphosphate kinase.